We begin with the raw amino-acid sequence, 687 residues long: Protein-glutamine gamma-glutamyltransferase 2 (687 aa).

N-acetylalanine is present on A2. S60 is subject to Phosphoserine. 2 disulfides stabilise this stretch: C230–C370 and C370–C371. Active-site residues include C277, H335, and D358. Ca(2+) is bound by residues N398, D400, E437, E447, and E452. Residue K468 is modified to N6-acetyllysine. Residue R476–M483 coordinates GTP. Residue E539 coordinates Ca(2+). R580–Y583 serves as a coordination point for GTP. An Isoglutamyl lysine isopeptide (Gln-Lys) (interchain with K-?) cross-link involves residue Q633.

This sequence belongs to the transglutaminase superfamily. Transglutaminase family. Monomer. Interacts with phospholipase C; promoting alpha-1 adrenergic receptor signaling. Interacts with PLCD1. In terms of assembly, homooligomer. Ca(2+) serves as cofactor. In terms of processing, disulfide bond formation inactivates the calcium-dependent acyltransferase activity. Cys-370 can form disulfide bonds with both Cys-230 and Cys-371: formation of a disulfide bond between Cys-230 and Cys-370 facilitates formation of the disulfide between Cys-370 and Cys-371, which promotes inactivation of the acyltransferase activity. May also form interchain disulfids between Cys-230 and Cys-370. Ca(2+) protects against disulfide bond formation and inactivation. Auto-transglutaminated: Forms covalent cross-links mediated by transglutaminase between Gln-633 and the epsilon-amino group of a lysine residue of itself or HMGB1, forming homopolymers and heteropolymers, respectively. Post-translationally, S-nitrosylated, leading to inactivation of the acyltransferase activity.

It is found in the cytoplasm. The protein localises to the cytosol. It localises to the nucleus. The protein resides in the chromosome. Its subcellular location is the secreted. It is found in the extracellular space. The protein localises to the extracellular matrix. It localises to the cell membrane. The protein resides in the mitochondrion. Its subcellular location is the perinuclear region. It catalyses the reaction L-glutaminyl-[protein] + L-lysyl-[protein] = [protein]-L-lysyl-N(6)-5-L-glutamyl-[protein] + NH4(+). The enzyme catalyses L-glutaminyl-[protein] + serotonin = 5-serotonyl-L-glutamyl-[protein] + NH4(+). The catalysed reaction is L-glutaminyl-[protein] + dopamine = 5-dopaminyl-L-glutamyl-[protein] + NH4(+). It carries out the reaction L-glutaminyl-[protein] + histamine = 5-histaminyl-L-glutamyl-[protein] + NH4(+). It catalyses the reaction L-glutaminyl-[protein] + (R)-noradrenaline = 5-(R)-noradrenalinyl-L-glutamyl-[protein] + NH4(+). The enzyme catalyses L-glutaminyl-[protein] + H2O = L-glutamyl-[protein] + NH4(+). With respect to regulation, acyltransferase activity is regulated by the binding of GTP and Ca(2+): inactivated by GTP, which stabilizes its closed structure, thereby obstructing the accessibility of substrates to the active sites. In contrast, Ca(2+) acts as a cofactor by inducing conformational change to the active open form. In absence of Ca(2+), Mg(2+) may bind Ca(2+)-binding sites, promoting GTP-binding and subsequent inhibition of the acyltransferase activity. Extracellularly reduced and activated by CLIC3. Specifically inhibited by compound VA4 ((S)-Benzyl (6-Acrylamido-1-(4-((5-(dimethylamino)naphthalen-1-yl)sulfonyl)piperazin-1-yl)-1-oxohexan-2-yl)carbamate), which specifically abolishes both the transamidation and GTP-binding activities. Its function is as follows. Calcium-dependent acyltransferase that catalyzes the formation of covalent bonds between peptide-bound glutamine and various primary amines, such as gamma-amino group of peptide-bound lysine, or mono- and polyamines, thereby producing cross-linked or aminated proteins, respectively. Involved in many biological processes, such as bone development, angiogenesis, wound healing, cellular differentiation, chromatin modification and apoptosis. Acts as a protein-glutamine gamma-glutamyltransferase by mediating the cross-linking of proteins, such as ACO2, HSPB6, FN1, HMGB1, RAP1GDS1, SLC25A4/ANT1, SPP1 and WDR54. Under physiological conditions, the protein cross-linking activity is inhibited by GTP; inhibition is relieved by Ca(2+) in response to various stresses. When secreted, catalyzes cross-linking of proteins of the extracellular matrix, such as FN1 and SPP1 resulting in the formation of scaffolds. Plays a key role during apoptosis, both by (1) promoting the cross-linking of cytoskeletal proteins resulting in condensation of the cytoplasm, and by (2) mediating cross-linking proteins of the extracellular matrix, resulting in the irreversible formation of scaffolds that stabilize the integrity of the dying cells before their clearance by phagocytosis, thereby preventing the leakage of harmful intracellular components. In addition to protein cross-linking, can use different monoamine substrates to catalyze a vast array of protein post-translational modifications: mediates aminylation of serotonin, dopamine, noradrenaline or histamine into glutamine residues of target proteins to generate protein serotonylation, dopaminylation, noradrenalinylation or histaminylation, respectively. Mediates protein serotonylation of small GTPases during activation and aggregation of platelets, leading to constitutive activation of these GTPases. Plays a key role in chromatin organization by mediating serotonylation and dopaminylation of histone H3. Catalyzes serotonylation of 'Gln-5' of histone H3 (H3Q5ser) during serotonergic neuron differentiation, thereby facilitating transcription. Acts as a mediator of neurotransmission-independent role of nuclear dopamine in ventral tegmental area (VTA) neurons: catalyzes dopaminylation of 'Gln-5' of histone H3 (H3Q5dop), thereby regulating relapse-related transcriptional plasticity in the reward system. Regulates vein remodeling by mediating serotonylation and subsequent inactivation of ATP2A2/SERCA2. Also acts as a protein deamidase by mediating the side chain deamidation of specific glutamine residues of proteins to glutamate. Catalyzes specific deamidation of protein gliadin, a component of wheat gluten in the diet. May also act as an isopeptidase cleaving the previously formed cross-links. Also able to participate in signaling pathways independently of its acyltransferase activity: acts as a signal transducer in alpha-1 adrenergic receptor-mediated stimulation of phospholipase C-delta (PLCD) activity and is required for coupling alpha-1 adrenergic agonists to the stimulation of phosphoinositide lipid metabolism. In terms of biological role, has cytotoxic activity: is able to induce apoptosis independently of its acyltransferase activity. The protein is Protein-glutamine gamma-glutamyltransferase 2 of Homo sapiens (Human).